The sequence spans 269 residues: C-type lectin domain family 2 member G (269 aa).

The Cytoplasmic portion of the chain corresponds to 1–107 (MNITRASLPM…SPESSAKLYC (107 aa)). A helical; Signal-anchor for type II membrane protein transmembrane segment spans residues 108-128 (CCGVIMVLTVAVVALSVALPA). The Extracellular portion of the chain corresponds to 129–269 (TKTEQILINK…SLHCPTPVPV (141 aa)). The C-type lectin domain occupies 150–254 (VGNKCFYFSE…HYIPRIWICS (105 aa)). Asn163 carries an N-linked (GlcNAc...) asparagine glycan. A disulfide bond links Cys171 and Cys253.

Detected in vagina, eye, tongue, stomach and spleen.

Its subcellular location is the cell membrane. Functionally, inhibits osteoclast formation. The sequence is that of C-type lectin domain family 2 member G (Clec2g) from Mus musculus (Mouse).